The chain runs to 320 residues: Short-chain dehydrogenase/reductase ATR7 (320 aa).

NADP(+) is bound by residues Ser-32, Ile-34, Gln-55, Asp-70, Asn-93, Lys-134, Tyr-167, Lys-171, and Thr-202. Tyr-167 (proton acceptor) is an active-site residue. Residue Lys-171 is the Lowers pKa of active site Tyr of the active site.

It belongs to the short-chain dehydrogenases/reductases (SDR) family.

Its pathway is mycotoxin biosynthesis. Its function is as follows. Short-chain dehydrogenase/reductase; part of the core atranone cluster (CAC) which products are predicted to catalyze most or all steps of mycotoxin atranone synthesis, starting from geranylgeranyl pyrophosphate (GGPP). The initial cyclization of GGPP to dolabellane is probably performed by the terpene cyclase ATR13. The Baeyer-Villiger oxidation near the end of the atranone synthesis, which converts atranones D and E to atranones F and G is predicted to be catalyzed by the monooxygenase ATR8. Of the CAC's other predicted gene products, the reducing PKS ATR6 might synthesize a polyketide chain. This polyketide is probably transferred onto the atranone backbone by the polyketide transferase ATR5. Other predicted CAC products include 4 oxygenases (ATR2, ATR3, ATR4, and ATR14), 3 short-chain reductases (ATR7, ATR9, and ATR10), and a methyltransferase (ATR12). These may all be involved in the various steps of atranone biosynthesis, although their specific roles must await experimental determination. In Stachybotrys chlorohalonatus (strain IBT 40285), this protein is Short-chain dehydrogenase/reductase ATR7.